We begin with the raw amino-acid sequence, 447 residues long: MSSLRLDLAYATVESAISTMEDPIRQAHDLLHNRTGAGSEFTGWLQLPKTYDRAEFARIIDAADRIRASSDVLLVIGIGGSYLGARAAIDMLSHSFHNQLPRSRRPGCAVLFAGHNISSAYLSDLFDILDGKDVSVNVISKSGTTTEPAIAFRLIRRWMEKKYSPDEVRRRIFATTDRAKGALKRLADEQGYETFVVPDDVGGRFSVLTTVGLLPIAAAGIDITALLAGARDAMAEYANPSLATNACYRYAAARNLLYRQGKQVELFVAYEPSLQHLAEWWKQLYGESEGKEGKGIFPASVLFSTDLHSMGQYIQEGQRMLMETVVRFDKPRRELTIPPAEDDSDGLNFLAGKTVDFVNQKAFAGTLLAHVDGQVPNMIISVPEQNAYHLGQLFYFFEKACGVSGYLLGVNPFDQPGVESYKRNMFALLGKPGFEKEKAALEARLPR.

E287 (proton donor) is an active-site residue. Catalysis depends on residues H308 and K422.

The protein belongs to the GPI family.

It is found in the cytoplasm. It catalyses the reaction alpha-D-glucose 6-phosphate = beta-D-fructose 6-phosphate. The protein operates within carbohydrate biosynthesis; gluconeogenesis. It participates in carbohydrate degradation; glycolysis; D-glyceraldehyde 3-phosphate and glycerone phosphate from D-glucose: step 2/4. In terms of biological role, catalyzes the reversible isomerization of glucose-6-phosphate to fructose-6-phosphate. In Heliobacterium modesticaldum (strain ATCC 51547 / Ice1), this protein is Glucose-6-phosphate isomerase.